A 417-amino-acid polypeptide reads, in one-letter code: Gamma-glutamyl phosphate reductase (417 aa).

Belongs to the gamma-glutamyl phosphate reductase family.

Its subcellular location is the cytoplasm. The enzyme catalyses L-glutamate 5-semialdehyde + phosphate + NADP(+) = L-glutamyl 5-phosphate + NADPH + H(+). It functions in the pathway amino-acid biosynthesis; L-proline biosynthesis; L-glutamate 5-semialdehyde from L-glutamate: step 2/2. Its function is as follows. Catalyzes the NADPH-dependent reduction of L-glutamate 5-phosphate into L-glutamate 5-semialdehyde and phosphate. The product spontaneously undergoes cyclization to form 1-pyrroline-5-carboxylate. The protein is Gamma-glutamyl phosphate reductase of Clostridium novyi (strain NT).